The following is a 438-amino-acid chain: Serine hydroxymethyltransferase (438 aa).

(6S)-5,6,7,8-tetrahydrofolate is bound by residues Leu133 and 137–139 (GHL). Residue Lys242 is modified to N6-(pyridoxal phosphate)lysine.

The protein belongs to the SHMT family. Homodimer. Pyridoxal 5'-phosphate serves as cofactor.

Its subcellular location is the cytoplasm. It catalyses the reaction (6R)-5,10-methylene-5,6,7,8-tetrahydrofolate + glycine + H2O = (6S)-5,6,7,8-tetrahydrofolate + L-serine. It participates in one-carbon metabolism; tetrahydrofolate interconversion. It functions in the pathway amino-acid biosynthesis; glycine biosynthesis; glycine from L-serine: step 1/1. Catalyzes the reversible interconversion of serine and glycine with tetrahydrofolate (THF) serving as the one-carbon carrier. This reaction serves as the major source of one-carbon groups required for the biosynthesis of purines, thymidylate, methionine, and other important biomolecules. Also exhibits THF-independent aldolase activity toward beta-hydroxyamino acids, producing glycine and aldehydes, via a retro-aldol mechanism. This chain is Serine hydroxymethyltransferase, found in Brucella melitensis biotype 2 (strain ATCC 23457).